Reading from the N-terminus, the 89-residue chain is Small ribosomal subunit protein uS15 (89 aa).

Belongs to the universal ribosomal protein uS15 family. As to quaternary structure, part of the 30S ribosomal subunit. Forms a bridge to the 50S subunit in the 70S ribosome, contacting the 23S rRNA.

In terms of biological role, one of the primary rRNA binding proteins, it binds directly to 16S rRNA where it helps nucleate assembly of the platform of the 30S subunit by binding and bridging several RNA helices of the 16S rRNA. Forms an intersubunit bridge (bridge B4) with the 23S rRNA of the 50S subunit in the ribosome. The sequence is that of Small ribosomal subunit protein uS15 from Cereibacter sphaeroides (strain ATCC 17023 / DSM 158 / JCM 6121 / CCUG 31486 / LMG 2827 / NBRC 12203 / NCIMB 8253 / ATH 2.4.1.) (Rhodobacter sphaeroides).